Here is a 147-residue protein sequence, read N- to C-terminus: SsrA-binding protein (147 aa).

It belongs to the SmpB family.

Its subcellular location is the cytoplasm. Its function is as follows. Required for rescue of stalled ribosomes mediated by trans-translation. Binds to transfer-messenger RNA (tmRNA), required for stable association of tmRNA with ribosomes. tmRNA and SmpB together mimic tRNA shape, replacing the anticodon stem-loop with SmpB. tmRNA is encoded by the ssrA gene; the 2 termini fold to resemble tRNA(Ala) and it encodes a 'tag peptide', a short internal open reading frame. During trans-translation Ala-aminoacylated tmRNA acts like a tRNA, entering the A-site of stalled ribosomes, displacing the stalled mRNA. The ribosome then switches to translate the ORF on the tmRNA; the nascent peptide is terminated with the 'tag peptide' encoded by the tmRNA and targeted for degradation. The ribosome is freed to recommence translation, which seems to be the essential function of trans-translation. This chain is SsrA-binding protein, found in Mycoplasmopsis agalactiae (strain NCTC 10123 / CIP 59.7 / PG2) (Mycoplasma agalactiae).